Here is a 294-residue protein sequence, read N- to C-terminus: 4-diphosphocytidyl-2-C-methyl-D-erythritol kinase (294 aa).

Residue Lys11 is part of the active site. 93–103 (PFGAGLGGGSS) provides a ligand contact to ATP. Asp135 is a catalytic residue.

This sequence belongs to the GHMP kinase family. IspE subfamily.

The catalysed reaction is 4-CDP-2-C-methyl-D-erythritol + ATP = 4-CDP-2-C-methyl-D-erythritol 2-phosphate + ADP + H(+). The protein operates within isoprenoid biosynthesis; isopentenyl diphosphate biosynthesis via DXP pathway; isopentenyl diphosphate from 1-deoxy-D-xylulose 5-phosphate: step 3/6. Catalyzes the phosphorylation of the position 2 hydroxy group of 4-diphosphocytidyl-2C-methyl-D-erythritol. This chain is 4-diphosphocytidyl-2-C-methyl-D-erythritol kinase, found in Chlorobium phaeobacteroides (strain DSM 266 / SMG 266 / 2430).